A 185-amino-acid chain; its full sequence is Kunitz-type serine protease inhibitor DrTI (185 aa).

2 disulfide bridges follow: C44-C89 and C139-C147.

The protein belongs to the protease inhibitor I3 (leguminous Kunitz-type inhibitor) family.

The protein localises to the secreted. In terms of biological role, inhibits bovine trypsin and human plasma kallikrein. The chain is Kunitz-type serine protease inhibitor DrTI from Delonix regia (Royal poinciana).